Here is a 380-residue protein sequence, read N- to C-terminus: Beta sliding clamp (380 aa).

This sequence belongs to the beta sliding clamp family. In terms of assembly, forms a ring-shaped head-to-tail homodimer around DNA which binds and tethers DNA polymerases and other proteins to the DNA. The DNA replisome complex has a single clamp-loading complex (3 tau and 1 each of delta, delta', psi and chi subunits) which binds 3 Pol III cores (1 core on the leading strand and 2 on the lagging strand) each with a beta sliding clamp dimer. Additional proteins in the replisome are other copies of gamma, psi and chi, Ssb, DNA helicase and RNA primase.

Its subcellular location is the cytoplasm. Functionally, confers DNA tethering and processivity to DNA polymerases and other proteins. Acts as a clamp, forming a ring around DNA (a reaction catalyzed by the clamp-loading complex) which diffuses in an ATP-independent manner freely and bidirectionally along dsDNA. Initially characterized for its ability to contact the catalytic subunit of DNA polymerase III (Pol III), a complex, multichain enzyme responsible for most of the replicative synthesis in bacteria; Pol III exhibits 3'-5' exonuclease proofreading activity. The beta chain is required for initiation of replication as well as for processivity of DNA replication. This is Beta sliding clamp (dnaN) from Mycoplasma genitalium (strain ATCC 33530 / DSM 19775 / NCTC 10195 / G37) (Mycoplasmoides genitalium).